Reading from the N-terminus, the 495-residue chain is Lysine--tRNA ligase (495 aa).

Positions 406 and 413 each coordinate Mg(2+).

The protein belongs to the class-II aminoacyl-tRNA synthetase family. Homodimer. It depends on Mg(2+) as a cofactor.

Its subcellular location is the cytoplasm. The enzyme catalyses tRNA(Lys) + L-lysine + ATP = L-lysyl-tRNA(Lys) + AMP + diphosphate. The sequence is that of Lysine--tRNA ligase from Staphylococcus aureus (strain MRSA252).